Reading from the N-terminus, the 567-residue chain is D-lactate dehydrogenase [cytochrome], mitochondrial (567 aa).

A mitochondrion-targeting transit peptide spans 1 to 56 (MAFASKFARSKTILSFLRPCRQLHSTPKSTGDVTVLSPVKGRRRLPTCWSSSLFPL). An FAD-binding PCMH-type domain is found at 142-319 (AVNIPDVVVF…TEITLRLQKI (178 aa)).

Belongs to the FAD-binding oxidoreductase/transferase type 4 family. Homodimer. It depends on FAD as a cofactor. As to expression, expressed in leaves, stems, flowers and roots.

It localises to the mitochondrion. The enzyme catalyses (R)-lactate + 2 Fe(III)-[cytochrome c] = 2 Fe(II)-[cytochrome c] + pyruvate + 2 H(+). Its activity is regulated as follows. Inhibited by cyanide ions. Functionally, catalyzes the stereospecific oxidation of D-lactate to pyruvate. Involved in the detoxification of methylglyoxal and D-lactate, but probably not involved in the metabolization of glycolate. The sequence is that of D-lactate dehydrogenase [cytochrome], mitochondrial from Arabidopsis thaliana (Mouse-ear cress).